Here is a 651-residue protein sequence, read N- to C-terminus: Acetyl-coenzyme A synthetase (651 aa).

Residues 190 to 193, T312, and N336 contribute to the CoA site; that span reads RGGK. ATP contacts are provided by residues 388 to 390, 412 to 417, D501, and R516; these read GEP and DTWWQT. S524 contributes to the CoA binding site. Position 527 (R527) interacts with ATP. Mg(2+) is bound by residues V538, H540, and V543. A CoA-binding site is contributed by R585. Residue K610 is modified to N6-acetyllysine.

It belongs to the ATP-dependent AMP-binding enzyme family. It depends on Mg(2+) as a cofactor. In terms of processing, acetylated. Deacetylation by the SIR2-homolog deacetylase activates the enzyme.

It catalyses the reaction acetate + ATP + CoA = acetyl-CoA + AMP + diphosphate. Catalyzes the conversion of acetate into acetyl-CoA (AcCoA), an essential intermediate at the junction of anabolic and catabolic pathways. AcsA undergoes a two-step reaction. In the first half reaction, AcsA combines acetate with ATP to form acetyl-adenylate (AcAMP) intermediate. In the second half reaction, it can then transfer the acetyl group from AcAMP to the sulfhydryl group of CoA, forming the product AcCoA. In Mesorhizobium japonicum (strain LMG 29417 / CECT 9101 / MAFF 303099) (Mesorhizobium loti (strain MAFF 303099)), this protein is Acetyl-coenzyme A synthetase.